A 138-amino-acid chain; its full sequence is Putative pre-16S rRNA nuclease (138 aa).

It belongs to the YqgF nuclease family.

The protein localises to the cytoplasm. In terms of biological role, could be a nuclease involved in processing of the 5'-end of pre-16S rRNA. This chain is Putative pre-16S rRNA nuclease, found in Enterobacter sp. (strain 638).